Here is a 230-residue protein sequence, read N- to C-terminus: Nucleoside diphosphate kinase 2, chloroplastic (230 aa).

The transit peptide at 1–64 (MEAMAVFSGS…SYPKTFRTRS (64 aa)) directs the protein to the chloroplast. The ATP site is built by lysine 90, phenylalanine 138, arginine 166, threonine 172, arginine 183, and asparagine 193. Catalysis depends on histidine 196, which acts as the Pros-phosphohistidine intermediate.

The protein belongs to the NDK family. Mg(2+) is required as a cofactor.

It is found in the plastid. Its subcellular location is the chloroplast. It catalyses the reaction a 2'-deoxyribonucleoside 5'-diphosphate + ATP = a 2'-deoxyribonucleoside 5'-triphosphate + ADP. It carries out the reaction a ribonucleoside 5'-diphosphate + ATP = a ribonucleoside 5'-triphosphate + ADP. Its function is as follows. Major role in the synthesis of nucleoside triphosphates other than ATP. The ATP gamma phosphate is transferred to the NDP beta phosphate via a ping-pong mechanism, using a phosphorylated active-site intermediate. The sequence is that of Nucleoside diphosphate kinase 2, chloroplastic (NDPK2) from Pisum sativum (Garden pea).